A 249-amino-acid chain; its full sequence is Exosome complex component Rrp41 (249 aa).

Belongs to the RNase PH family. Rrp41 subfamily. Component of the archaeal exosome complex. Forms a hexameric ring-like arrangement composed of 3 Rrp41-Rrp42 heterodimers. The hexameric ring associates with a trimer of Rrp4 and/or Csl4 subunits.

The protein resides in the cytoplasm. Functionally, catalytic component of the exosome, which is a complex involved in RNA degradation. Has 3'-&gt;5' exoribonuclease activity. Can also synthesize heteromeric RNA-tails. In Thermococcus gammatolerans (strain DSM 15229 / JCM 11827 / EJ3), this protein is Exosome complex component Rrp41.